Consider the following 226-residue polypeptide: Glutathione S-transferase kappa 1 (226 aa).

16 to 18 (SPY) contacts glutathione. Lysine 49 bears the N6-succinyllysine mark. Residue asparagine 53 participates in glutathione binding. Lysine 71 and lysine 85 each carry N6-acetyllysine. Lysine 116 bears the N6-acetyllysine; alternate mark. At lysine 116 the chain carries N6-succinyllysine; alternate. An N6-succinyllysine modification is found at lysine 144. Lysine 158 is modified (N6-acetyllysine; alternate). N6-succinyllysine; alternate is present on lysine 158. 2 positions are modified to N6-acetyllysine: lysine 165 and lysine 169. Glutathione-binding positions include leucine 183 and 200–201 (SD).

It belongs to the GST superfamily. Kappa family. In terms of assembly, homodimer. Ubiquitous.

It is found in the peroxisome. It catalyses the reaction RX + glutathione = an S-substituted glutathione + a halide anion + H(+). Functionally, glutathione S-transferase that catalyzes the conjugation of glutathione to exogenous and endogenous compounds. Significant glutathione conjugating activity is found only with the model substrate, 1-chloro-2,4-dinitrobenzene (CDNB). This Homo sapiens (Human) protein is Glutathione S-transferase kappa 1 (GSTK1).